The chain runs to 32 residues: Putative leucine-rich repeat protein PS14 (32 aa).

The sequence is that of Putative leucine-rich repeat protein PS14 from Pinus strobus (Eastern white pine).